Reading from the N-terminus, the 67-residue chain is Cold shock protein ScoF (67 aa).

The region spanning 4-64 is the CSD domain; that stretch reads GTVKWFNSEK…GQKGPQAENI (61 aa).

Its subcellular location is the cytoplasm. This Streptomyces coelicolor (strain ATCC BAA-471 / A3(2) / M145) protein is Cold shock protein ScoF (scoF).